The chain runs to 91 residues: Large ribosomal subunit protein bL27 (91 aa).

Residues 1 to 22 (MAHKKAGGSSRNGRDSAGRRLG) are disordered.

Belongs to the bacterial ribosomal protein bL27 family.

This Methylocella silvestris (strain DSM 15510 / CIP 108128 / LMG 27833 / NCIMB 13906 / BL2) protein is Large ribosomal subunit protein bL27.